The sequence spans 434 residues: MNIIVVGLSHKTAAVEIREKVAFSPTQMEKPLHALVSIPDITEGVIVSTCNRVEIYATTRDIAGGIARLKRFLADYHNFPLETLEPHLYSYHGEAATRHVFRVASSLDSMVVGEPQILGQIKTSYGYAAEYKSSGIILNRFLHKAFSVAKRVRTETKIASSAVSVAFAAVELAKKIFGDLSDKTVMLIGAGEMCELAAKHFINTGVRGVMVTNRTFERAVKLAEEFDGKAVNYEDLFDQLHKADIILSSTGAPHFIIKPKDIEDVIRRRKLKPMFFIDIAVPRDIDPKVNDIENIYLYTVDDLNGVVATNLEQRKKESEKAEAIVEQEIGQFFKWLSSLEVTPTIVALRSKFDEIRRAELAKTMANWKDLPPEGEKRLEALTNAIMNKLLHQPTSVLKRSDQGNRNDLYVDALRNLFDLETAPHEEMELGELEE.

Residues Thr49–Arg52, Ser109, Glu114–Gln116, and Gln120 contribute to the substrate site. Cys50 functions as the Nucleophile in the catalytic mechanism. Gly189–Cys194 contributes to the NADP(+) binding site.

It belongs to the glutamyl-tRNA reductase family. Homodimer.

It catalyses the reaction (S)-4-amino-5-oxopentanoate + tRNA(Glu) + NADP(+) = L-glutamyl-tRNA(Glu) + NADPH + H(+). The protein operates within porphyrin-containing compound metabolism; protoporphyrin-IX biosynthesis; 5-aminolevulinate from L-glutamyl-tRNA(Glu): step 1/2. In terms of biological role, catalyzes the NADPH-dependent reduction of glutamyl-tRNA(Glu) to glutamate 1-semialdehyde (GSA). In Geotalea daltonii (strain DSM 22248 / JCM 15807 / FRC-32) (Geobacter daltonii), this protein is Glutamyl-tRNA reductase.